The following is a 154-amino-acid chain: Large ribosomal subunit protein uL30 (154 aa).

Residues 114 to 146 (PTLRLHPPRGGHDGVKHPVKEGGQLGKHDTEGI) are disordered. Over residues 123-144 (GGHDGVKHPVKEGGQLGKHDTE) the composition is skewed to basic and acidic residues.

The protein belongs to the universal ribosomal protein uL30 family. In terms of assembly, part of the 50S ribosomal subunit. Binds 5S rRNA.

In terms of biological role, this is one of 5 proteins that mediate the attachment of the 5S rRNA onto the large ribosomal subunit, stabilizing the orientation of adjacent RNA domains. In Haloarcula marismortui (strain ATCC 43049 / DSM 3752 / JCM 8966 / VKM B-1809) (Halobacterium marismortui), this protein is Large ribosomal subunit protein uL30.